The primary structure comprises 519 residues: Protein twist (519 aa).

4 disordered regions span residues 53–77 (MQQQ…QQQY), 131–156 (NFEQ…VATA), 301–321 (YEAY…SDRD), and 368–389 (FRKP…DEFS). 2 stretches are compositionally biased toward low complexity: residues 54 to 76 (QQQQ…QQQQ) and 134 to 146 (QQQQ…QQQQ). The span at 308-317 (NSLNGSTYSS) shows a compositional bias: polar residues. Positions 368 to 379 (FRKPRRRLKRKP) are enriched in basic residues. The bHLH domain maps to 390 to 441 (NQRVMANVRERQRTQSLNDAFKALQQIIPTLPSDKLSKIQTLKLATRYIDFL).

Efficient DNA binding requires dimerization with another bHLH protein. Homodimer.

The protein localises to the nucleus. Functionally, involved in the establishment and dorsoventral patterning of germ layers in the embryo. In Drosophila virilis (Fruit fly), this protein is Protein twist.